We begin with the raw amino-acid sequence, 462 residues long: 3-isopropylmalate dehydratase large subunit (462 aa).

Residues cysteine 337, cysteine 397, and cysteine 400 each coordinate [4Fe-4S] cluster.

It belongs to the aconitase/IPM isomerase family. LeuC type 1 subfamily. As to quaternary structure, heterodimer of LeuC and LeuD. [4Fe-4S] cluster serves as cofactor.

The catalysed reaction is (2R,3S)-3-isopropylmalate = (2S)-2-isopropylmalate. It functions in the pathway amino-acid biosynthesis; L-leucine biosynthesis; L-leucine from 3-methyl-2-oxobutanoate: step 2/4. Functionally, catalyzes the isomerization between 2-isopropylmalate and 3-isopropylmalate, via the formation of 2-isopropylmaleate. The sequence is that of 3-isopropylmalate dehydratase large subunit from Listeria monocytogenes serovar 1/2a (strain ATCC BAA-679 / EGD-e).